Here is a 185-residue protein sequence, read N- to C-terminus: Dense granule protein 2 (185 aa).

The first 23 residues, 1–23 (MFAVKHCLLVVAVGALVNVSVRA), serve as a signal peptide directing secretion. The N-linked (GlcNAc...) asparagine glycan is linked to Asn-18. Disordered stretches follow at residues 41–75 (GKPL…SQRA) and 142–185 (ANVE…DFSQ). Over residues 43-66 (PLDERAVGGKGEHTPPLPDERQQE) the composition is skewed to basic and acidic residues.

May also be O-glycosylated. In terms of processing, the N-terminus is blocked.

The protein resides in the parasitophorous vacuole. Its function is as follows. Major granular component involved in excreted-secreted antigen (ESA) immunity. Possibly acts in conjunction with GRA1. In Toxoplasma gondii, this protein is Dense granule protein 2 (GRA2).